A 143-amino-acid polypeptide reads, in one-letter code: Large ribosomal subunit protein uL11 (143 aa).

The protein belongs to the universal ribosomal protein uL11 family. Part of the ribosomal stalk of the 50S ribosomal subunit. Interacts with L10 and the large rRNA to form the base of the stalk. L10 forms an elongated spine to which L12 dimers bind in a sequential fashion forming a multimeric L10(L12)X complex. In terms of processing, one or more lysine residues are methylated.

Its function is as follows. Forms part of the ribosomal stalk which helps the ribosome interact with GTP-bound translation factors. This chain is Large ribosomal subunit protein uL11, found in Marinobacter nauticus (strain ATCC 700491 / DSM 11845 / VT8) (Marinobacter aquaeolei).